We begin with the raw amino-acid sequence, 452 residues long: MHQRALLFSALLTAVRAQQAGTLTEEVHPSLTWQKCTSEGSCTEQSGSVVIDSNWRWTHSVNDSTNCYTGNTWDATLCPDDETCATNCALDGADYESTYGVTTDGDSLTLKFVTGSNVGSRLYLMDTSDEGYQTFNLLDAEFTFDVDVSNLPCGLNGALYFTAMDADGGASKYPANKAGAKYGTGYCDSQCPRDLKFIDGQANVDGWEPSSNNDNTGIGNHGSCCPEMDIWEANKISTALTPHPCDSSEQTMCEGNDCGGTYSDDRYGGTCDPDGCDFNPYRMGNDSFYGPGKTIDTGSKMTVVTQFITDGSGSLSEIKRYYVQNGNVIANADSNISGVTGNSITTDFCTAQKKAFGDDDIFAEHNGLAGISDAMSSMVLILSLWDDYYASMEWLDSDYPENATATDPGVARGTCDSESGVPATVEGAHPDSSVTFSNIKFGPINSTFSASA.

An N-terminal signal peptide occupies residues 1–17; sequence MHQRALLFSALLTAVRA. Asparagine 62 carries N-linked (GlcNAc...) asparagine glycosylation. The active-site Nucleophile is glutamate 227. Glutamate 232 functions as the Proton donor in the catalytic mechanism. 4 N-linked (GlcNAc...) asparagine glycosylation sites follow: asparagine 285, asparagine 335, asparagine 402, and asparagine 445.

Belongs to the glycosyl hydrolase 7 (cellulase C) family.

Its subcellular location is the secreted. The enzyme catalyses Hydrolysis of (1-&gt;4)-beta-D-glucosidic linkages in cellulose and cellotetraose, releasing cellobiose from the non-reducing ends of the chains.. Its function is as follows. The biological conversion of cellulose to glucose generally requires three types of hydrolytic enzymes: (1) Endoglucanases which cut internal beta-1,4-glucosidic bonds; (2) Exocellobiohydrolases that cut the disaccharide cellobiose from the non-reducing end of the cellulose polymer chain; (3) Beta-1,4-glucosidases which hydrolyze the cellobiose and other short cello-oligosaccharides to glucose. The polypeptide is Probable 1,4-beta-D-glucan cellobiohydrolase A (cbhA) (Aspergillus niger (strain ATCC MYA-4892 / CBS 513.88 / FGSC A1513)).